The primary structure comprises 315 residues: Neuroguidin (315 aa).

2 disordered regions span residues 127–201 (SEND…KQKR) and 289–315 (VQDI…RKRK). 2 stretches are compositionally biased toward basic and acidic residues: residues 159 to 168 (KTKEQKEPSG) and 182 to 200 (YDGD…EKQK). Residues 181–206 (HYDGDLTEADRQKERVEKQKRAALRS) are a coiled coil. Basic residues predominate over residues 296–315 (KPKKKKIIKKGKKKVFRKRK).

It belongs to the SAS10 family. Part of the small subunit (SSU) processome, composed of more than 70 proteins and the RNA chaperone small nucleolar RNA (snoRNA) U3.

Its subcellular location is the nucleus. The protein resides in the nucleolus. It is found in the chromosome. The protein localises to the centromere. It localises to the cytoplasm. Its subcellular location is the cell projection. The protein resides in the axon. It is found in the dendrite. The protein localises to the filopodium. Functionally, part of the small subunit (SSU) processome, first precursor of the small eukaryotic ribosomal subunit. During the assembly of the SSU processome in the nucleolus, many ribosome biogenesis factors, an RNA chaperone and ribosomal proteins associate with the nascent pre-rRNA and work in concert to generate RNA folding, modifications, rearrangements and cleavage as well as targeted degradation of pre-ribosomal RNA by the RNA exosome. Its dissociation from the complex determines the transition from state pre-A1 to state pre-A1*. May inhibit mRNA translation. In Danio rerio (Zebrafish), this protein is Neuroguidin (ngdn).